Consider the following 606-residue polypeptide: Phosphomethylpyrimidine synthase (606 aa).

The tract at residues 84–103 is disordered; that stretch reads EPYPARSVKPEDNGLTSSPI. Substrate contacts are provided by residues N209, M238, Y267, H303, 323-325, 364-367, and E403; these read SRG and DGLR. Residue H407 coordinates Zn(2+). Residue Y430 participates in substrate binding. H471 is a binding site for Zn(2+). C551, C554, and C559 together coordinate [4Fe-4S] cluster.

The protein belongs to the ThiC family. Homodimer. The cofactor is [4Fe-4S] cluster.

The enzyme catalyses 5-amino-1-(5-phospho-beta-D-ribosyl)imidazole + S-adenosyl-L-methionine = 4-amino-2-methyl-5-(phosphooxymethyl)pyrimidine + CO + 5'-deoxyadenosine + formate + L-methionine + 3 H(+). It participates in cofactor biosynthesis; thiamine diphosphate biosynthesis. In terms of biological role, catalyzes the synthesis of the hydroxymethylpyrimidine phosphate (HMP-P) moiety of thiamine from aminoimidazole ribotide (AIR) in a radical S-adenosyl-L-methionine (SAM)-dependent reaction. The chain is Phosphomethylpyrimidine synthase from Bartonella tribocorum (strain CIP 105476 / IBS 506).